A 580-amino-acid chain; its full sequence is Alpha-thujene synthase, chloroplastic (580 aa).

The transit peptide at Met-1 to Arg-32 directs the protein to the chloroplast. Residues Arg-296, Asp-333, Asp-337, Arg-473, and Asp-476 each contribute to the (2E)-geranyl diphosphate site. Asp-333 and Asp-337 together coordinate Mg(2+). Positions Asp-333–Asp-337 match the DDXXD motif motif. Residues Asp-476, Thr-480, and Glu-484 each contribute to the Mg(2+) site.

This sequence belongs to the terpene synthase family. Tpsb subfamily. In terms of assembly, monomer. It depends on Mg(2+) as a cofactor. Mn(2+) serves as cofactor. In terms of tissue distribution, expressed in developing and mature fruits. Barely detectable in leaves and shoots.

The protein resides in the plastid. It localises to the chloroplast. It catalyses the reaction (2E)-geranyl diphosphate = alpha-thujene + diphosphate. It functions in the pathway secondary metabolite biosynthesis; terpenoid biosynthesis. Its function is as follows. Monoterpene synthase (TPS) involved in the biosynthesis of monoterpene natural products used by traditional Chinese medicine to treat headache, inflammation and intoxication. Catalyzes the conversion of (2E)-geranyl diphosphate (GPP) into alpha-thujene. The polypeptide is Alpha-thujene synthase, chloroplastic (Litsea cubeba (Aromatic litsea)).